The chain runs to 906 residues: Protein translocase subunit SecA (906 aa).

ATP is bound by residues Gln86, 104-108 (GEGKT), and Asp499. Residues 865-885 (VSRIDPKDRNPEDPTSWGRVS) are disordered. Positions 890, 892, 901, and 902 each coordinate Zn(2+).

The protein belongs to the SecA family. Monomer and homodimer. Part of the essential Sec protein translocation apparatus which comprises SecA, SecYEG and auxiliary proteins SecDF-YajC and YidC. Zn(2+) serves as cofactor.

Its subcellular location is the cell inner membrane. It localises to the cytoplasm. The catalysed reaction is ATP + H2O + cellular proteinSide 1 = ADP + phosphate + cellular proteinSide 2.. Functionally, part of the Sec protein translocase complex. Interacts with the SecYEG preprotein conducting channel. Has a central role in coupling the hydrolysis of ATP to the transfer of proteins into and across the cell membrane, serving both as a receptor for the preprotein-SecB complex and as an ATP-driven molecular motor driving the stepwise translocation of polypeptide chains across the membrane. The protein is Protein translocase subunit SecA of Rickettsia canadensis (strain McKiel).